The following is a 263-amino-acid chain: R-spondin-1 (263 aa).

Positions 1 to 20 (MRLGLCVVALVLSWTHLTIS) are cleaved as a signal peptide. 2 FU repeats span residues 34–85 (AEGS…GYFD) and 91–135 (MNKC…GSSA). Intrachain disulfides connect C40–C47, C44–C53, C56–C75, C79–C94, C97–C105, C102–C111, C114–C125, C129–C142, C148–C190, C159–C166, and C199–C206. Residue N137 is glycosylated (N-linked (GlcNAc...) asparagine). The region spanning 147–207 (QCEMSEWSPW…RCTVRRVPCP (61 aa)) is the TSP type-1 domain. 2 C-linked (Man) tryptophan glycosylation sites follow: W153 and W156. The tract at residues 206 to 263 (CPEGQKRRKGGQGRRENANRNLARKESKEAGAGSRRRKGQQQQQQQGTVGPLTSAGPA) is disordered. Positions 218-234 (GRRENANRNLARKESKE) are enriched in basic and acidic residues.

The protein belongs to the R-spondin family. As to quaternary structure, interacts with the extracellular domain of FZD8 and LRP6. It however does not form a ternary complex with FZD8 and LRP6. Interacts with WNT1. Binds heparin. Interacts with ZNRF3; promoting indirect interaction between ZNRF3 and LGR4 and membrane clearance of ZNRF3. Interacts with LGR4, LGR5 and LGR6. Identified in a complex composed of RNF43, LGR5 and RSPO1. Interacts (via FU repeats) with KREM1. Post-translationally, C-, and N-glycosylated. N-glycosylation at Asn-137, negatively influences its secretion and enhancing effect on Wnt/beta-catenin signaling. C-mannosylation at Trp-156 by DPY19L3 is required for its secretion and regulates the enhancing activity of Wnt signaling. Abundantly expressed in adrenal glands, ovary, testis, thyroid and trachea but not in bone marrow, spinal cord, stomach, leukocytes colon, small intestine, prostate, thymus and spleen.

The protein resides in the secreted. It is found in the nucleus. Functionally, activator of the canonical Wnt signaling pathway by acting as a ligand for LGR4-6 receptors. Upon binding to LGR4-6 (LGR4, LGR5 or LGR6), LGR4-6 associate with phosphorylated LRP6 and frizzled receptors that are activated by extracellular Wnt receptors, triggering the canonical Wnt signaling pathway to increase expression of target genes. Also regulates the canonical Wnt/beta-catenin-dependent pathway and non-canonical Wnt signaling by acting as an inhibitor of ZNRF3, an important regulator of the Wnt signaling pathway. Acts as a ligand for frizzled FZD8 and LRP6. May negatively regulate the TGF-beta pathway. Has a essential roles in ovary determination. Regulates Wnt signaling by antagonizing DKK1/KREM1-mediated internalization of LRP6 through an interaction with KREM1. In Homo sapiens (Human), this protein is R-spondin-1 (RSPO1).